The primary structure comprises 463 residues: Argininosuccinate lyase (463 aa).

Belongs to the lyase 1 family. Argininosuccinate lyase subfamily.

It localises to the cytoplasm. The catalysed reaction is 2-(N(omega)-L-arginino)succinate = fumarate + L-arginine. Its pathway is amino-acid biosynthesis; L-arginine biosynthesis; L-arginine from L-ornithine and carbamoyl phosphate: step 3/3. This chain is Argininosuccinate lyase, found in Chlorobaculum tepidum (strain ATCC 49652 / DSM 12025 / NBRC 103806 / TLS) (Chlorobium tepidum).